We begin with the raw amino-acid sequence, 333 residues long: Large ribosomal subunit protein uL3 (333 aa).

The protein belongs to the universal ribosomal protein uL3 family. In terms of assembly, part of the 50S ribosomal subunit. Forms a cluster with proteins L14 and L24e.

Its function is as follows. One of the primary rRNA binding proteins, it binds directly near the 3'-end of the 23S rRNA, where it nucleates assembly of the 50S subunit. The protein is Large ribosomal subunit protein uL3 of Methanocorpusculum labreanum (strain ATCC 43576 / DSM 4855 / Z).